Consider the following 39-residue polypeptide: Potassium channel toxin alpha-KTx 2.16 (39 aa).

3 disulfides stabilise this stretch: C7/C29, C13/C34, and C17/C36. I39 bears the Isoleucine amide mark.

Belongs to the short scorpion toxin superfamily. Potassium channel inhibitor family. Alpha-KTx 02 subfamily. Expressed by the venom gland.

It is found in the secreted. Its function is as follows. Blocks human voltage-gated potassium channels Kv1.2/KCNA2 (IC(50)=0.7 nM), Kv1.3/KCNA3 (IC(50)=26.2 nM) and blocks intermediate conductance calcium-activated potassium channel KCa3.1/KCNN4 (IC(50)=56 nM). The protein is Potassium channel toxin alpha-KTx 2.16 of Centruroides tecomanus (Scorpion).